Consider the following 628-residue polypeptide: Cystathionine gamma-synthase-like enzyme iboG2 (628 aa).

Y313 contributes to the substrate binding site. At K417 the chain carries N6-(pyridoxal phosphate)lysine.

This sequence belongs to the trans-sulfuration enzymes family. Pyridoxal 5'-phosphate is required as a cofactor.

It functions in the pathway secondary metabolite biosynthesis. Functionally, cystathionine gamma-synthase-like enzyme; part of the gene cluster that mediates the biosynthesis of the psychoactive metabolites ibotenic acid and muscimol. The first committed step is glutamate hydroxylation by the 2-oxoglutarate-dependent dioxygenase iboH, and the last step is decarboxylation of ibotenic acid to muscimol by the decarboxylase iboD. The order of the intermediate reactions is somewhat ambiguous. IboA likely activates the carboxylic acid at position 5 to introduce an amide bond, and the flavin monooxygenase iboF generates the N-O bond. There are several options for the latter step. One option is that iboF directly hydroxylates the amide nitrogen formed by iboA to produce a hydroxamic acid species. Another option is that iboF hydroxylates an external N-containing compound, whose resulting N-O bond is subsequently introduced into the hydroxyglutamate scaffold. The paralogous PLP-dependent cystathionine gamma-synthase-like enzymes iboG1 and iboG2 are likely involved in substitution of the OH group at position 3 by the O-N moiety. The first cyclic intermediate is most probably tricholomic acid which is likely desaturated to ibotenic acid by the cytochrome P450 monooxygenase iboC. This Amanita muscaria (strain Koide BX008) protein is Cystathionine gamma-synthase-like enzyme iboG2.